A 224-amino-acid polypeptide reads, in one-letter code: MSSYFVNSTFPVTLASGQESFLGQLPLYSSGYADPLRHYPAPYGPGPGQDKGFATSSYYPPAGGGYGRAAPCDYGPAPAFYREKESACALSGADEQPPFHPEPRKSDCAQDKSVFGETEEQKCSTPVYPWMQRMNSCNSSSFGPSGRRGRQTYTRYQTLELEKEFHYNRYLTRRRRIEIAHALCLTERQIKIWFQNRRMKWKKESKLLSASQLSAEEEEEKQAE.

Positions 127–132 (VYPWMQ) match the Antp-type hexapeptide motif. The homeobox DNA-binding region spans 146-205 (GRRGRQTYTRYQTLELEKEFHYNRYLTRRRRIEIAHALCLTERQIKIWFQNRRMKWKKES). Ser-214 is modified (phosphoserine).

Belongs to the Antp homeobox family.

It localises to the nucleus. Sequence-specific transcription factor which is part of a developmental regulatory system that provides cells with specific positional identities on the anterior-posterior axis. This Homo sapiens (Human) protein is Homeobox protein Hox-B6 (HOXB6).